Consider the following 98-residue polypeptide: NADH-ubiquinone oxidoreductase chain 4L (98 aa).

3 consecutive transmembrane segments (helical) span residues 1–21, 29–49, and 61–81; these read MSLI…GLLM, SLLC…MMVL, and IILL…LVMI.

It belongs to the complex I subunit 4L family. In terms of assembly, core subunit of respiratory chain NADH dehydrogenase (Complex I) which is composed of 45 different subunits.

It is found in the mitochondrion inner membrane. The catalysed reaction is a ubiquinone + NADH + 5 H(+)(in) = a ubiquinol + NAD(+) + 4 H(+)(out). In terms of biological role, core subunit of the mitochondrial membrane respiratory chain NADH dehydrogenase (Complex I) which catalyzes electron transfer from NADH through the respiratory chain, using ubiquinone as an electron acceptor. Part of the enzyme membrane arm which is embedded in the lipid bilayer and involved in proton translocation. The chain is NADH-ubiquinone oxidoreductase chain 4L (MT-ND4L) from Rhinoceros unicornis (Greater Indian rhinoceros).